Reading from the N-terminus, the 254-residue chain is Alcohol dehydrogenase (254 aa).

10 to 33 (FVAGLGGIGLDTNREIVKSGPKNL) serves as a coordination point for NAD(+). Residue Ser-138 participates in substrate binding. Tyr-151 functions as the Proton acceptor in the catalytic mechanism.

This sequence belongs to the short-chain dehydrogenases/reductases (SDR) family. As to quaternary structure, homodimer.

The enzyme catalyses a primary alcohol + NAD(+) = an aldehyde + NADH + H(+). The catalysed reaction is a secondary alcohol + NAD(+) = a ketone + NADH + H(+). This Scaptomyza albovittata (Fruit fly) protein is Alcohol dehydrogenase (Adh).